The following is a 265-amino-acid chain: Phosphate import ATP-binding protein PstB (265 aa).

Positions 18-260 constitute an ABC transporter domain; that stretch reads IAAKGVNVYY…PEDPRTESYI (243 aa). 50–57 is an ATP binding site; it reads GPSGCGKS.

This sequence belongs to the ABC transporter superfamily. Phosphate importer (TC 3.A.1.7) family. The complex is composed of two ATP-binding proteins (PstB), two transmembrane proteins (PstC and PstA) and a solute-binding protein (PstS).

The protein localises to the cell inner membrane. The catalysed reaction is phosphate(out) + ATP + H2O = ADP + 2 phosphate(in) + H(+). Part of the ABC transporter complex PstSACB involved in phosphate import. Responsible for energy coupling to the transport system. This Ruegeria sp. (strain TM1040) (Silicibacter sp.) protein is Phosphate import ATP-binding protein PstB.